A 931-amino-acid chain; its full sequence is Aftiphilin (931 aa).

Residues 1 to 49 (MEPDIIRMYSSSPPPLDNGAEDDEEDEFGEFGGFSEVSPSGVGFVDFDT) form a disordered region. The segment covering 19 to 29 (GAEDDEEDEFG) has biased composition (acidic residues). The WXXF motif 1 signature appears at 28–31 (FGEF). Positions 33–45 (GFSEVSPSGVGFV) are enriched in low complexity. Serine 151 bears the Phosphoserine mark. Polar residues predominate over residues 371–381 (SVKTSDVNEIG). The interval 371–454 (SVKTSDVNEI…PFVTSTQDSM (84 aa)) is disordered. Serine 395 carries the post-translational modification Phosphoserine. Residues 433–436 (FGDF) carry the WXXF motif 2 motif. A compositionally biased stretch (polar residues) spans 439 to 454 (ANGTTPPFVTSTQDSM). Positions 476–479 (FGEF) match the WXXF motif 3 motif. 2 disordered regions span residues 494-561 (TESD…SSAG) and 599-636 (WQSQ…LQEP). The segment covering 516 to 530 (GGKDSKPDSKLKNGQ) has biased composition (basic and acidic residues). Residue threonine 613 is modified to Phosphothreonine. The span at 618 to 631 (SVSSAASKGAVASG) shows a compositional bias: low complexity. Positions 712–714 (YQW) match the CLTCL1/Clathrin-binding motif. Residues 821 to 825 (LLNLD) form a clathrin-binding region.

As to quaternary structure, self-associates. Interacts with GGA1 (via GAE domain). Interacts with GGA3 (via GAE domain), AP1G1 (via GAE domain) and AP1G2 (via GAE domain). Component of the aftiphilin/p200/gamma-synergin complex, at least composed of AFTPH/aftiphilin, HEATR5B/p200a and SYNRG/gamma-synergin, which plays a role in the AP1G1/AP-1-mediated protein trafficking from early to recycling endosomes. Within the complex interacts with HEATR5B/p200a and SYNRG/gamma-synergin; the interactions are direct. Interacts with AP1G1/AP-1; the interaction is required to recruit AFTPH/aftiphilin to the perinuclear region of the cell. Interacts with CLTCL1/Clathrin.

Its subcellular location is the cytoplasm. The protein localises to the perinuclear region. It localises to the cytoplasmic vesicle. The protein resides in the clathrin-coated vesicle. Component of clathrin-coated vesicles. Component of the aftiphilin/p200/gamma-synergin complex, which plays roles in AP1G1/AP-1-mediated protein trafficking including the trafficking of transferrin from early to recycling endosomes, and the membrane trafficking of furin and the lysosomal enzyme cathepsin D between the trans-Golgi network (TGN) and endosomes. This chain is Aftiphilin (Aftph), found in Mus musculus (Mouse).